Consider the following 286-residue polypeptide: Ribosomal RNA small subunit methyltransferase A (286 aa).

Residues N28, L30, G55, E77, D103, and N123 each coordinate S-adenosyl-L-methionine.

It belongs to the class I-like SAM-binding methyltransferase superfamily. rRNA adenine N(6)-methyltransferase family. RsmA subfamily.

It is found in the cytoplasm. The catalysed reaction is adenosine(1518)/adenosine(1519) in 16S rRNA + 4 S-adenosyl-L-methionine = N(6)-dimethyladenosine(1518)/N(6)-dimethyladenosine(1519) in 16S rRNA + 4 S-adenosyl-L-homocysteine + 4 H(+). Functionally, specifically dimethylates two adjacent adenosines (A1518 and A1519) in the loop of a conserved hairpin near the 3'-end of 16S rRNA in the 30S particle. May play a critical role in biogenesis of 30S subunits. This chain is Ribosomal RNA small subunit methyltransferase A, found in Rhodopseudomonas palustris (strain BisB18).